Here is a 391-residue protein sequence, read N- to C-terminus: Terminal nucleotidyltransferase 5C (391 aa).

It belongs to the TENT family. In terms of assembly, interacts with BCCIP and PABPC1; the interaction has no effect on TENT5C poly(A) polymerase function. Interacts with PLK4; this interaction leads to the TENT5C recruitment into the centrosome.

It localises to the nucleus. The protein resides in the cytoplasm. It is found in the cytoskeleton. The protein localises to the microtubule organizing center. Its subcellular location is the centrosome. The enzyme catalyses RNA(n) + ATP = RNA(n)-3'-adenine ribonucleotide + diphosphate. Its function is as follows. Catalyzes the transfer of one adenosine molecule from an ATP to an mRNA poly(A) tail bearing a 3'-OH terminal group and enhances mRNA stability and gene expression. Can also elongate RNA oligos ending with uridine molecule, provided that the sequence is adenosine-rich. Mainly targets mRNAs encoding endoplasmic reticulum-targeted protein. The protein is Terminal nucleotidyltransferase 5C of Rattus norvegicus (Rat).